The chain runs to 994 residues: Zinc finger protein basonuclin-1 (994 aa).

The segment at 1–29 (MRRRPPSRGGRGAARARETRRQPRHRSGR) is disordered. A hydrophobic region spans residues 240 to 249 (MTFMLPFQFF). 2 C2H2-type zinc fingers span residues 357–380 (VFCT…NAVH) and 385–414 (HKCT…PRLH). Disordered regions lie at residues 402–425 (RNRH…RDKD) and 444–472 (TVTS…FPNI). The Nuclear localization signal signature appears at 533–539 (PKKKSRK). Phosphoserine is present on residues S537 and S541. Residues 555–639 (NEKRHNLSSD…HNSERETEQT (85 aa)) are disordered. Over residues 563–578 (SDEDMPLQVVSEDEQE) the composition is skewed to acidic residues. Positions 603 to 614 (PEGERPCHRESV) are enriched in basic and acidic residues. Over residues 615-630 (IESSGAISQTPEQATH) the composition is skewed to polar residues. 2 C2H2-type zinc fingers span residues 720–743 (FQCD…KNMH) and 748–775 (HTCT…LNLH). The span at 859-877 (STTSSMKSESSSHSSWDSD) shows a compositional bias: low complexity. Residues 859–881 (STTSSMKSESSSHSSWDSDGVSE) form a disordered region. 2 consecutive C2H2-type zinc fingers follow at residues 928–951 (ITCH…KTVH) and 956–983 (HKCK…PNLH). A disordered region spans residues 970-994 (VRSRNRHSQNPNLHKSLASSPSHLQ).

Interacts with HSF2BP (via C-terminus). Phosphorylation on Ser-537 and Ser-541 leads to cytoplasmic localization. In epidermis, primarily detected in cells of the basal or immediately suprabasal layers (at protein level). In hair follicles, mainly expressed in the outer root sheath (at protein level). Expressed in epidermis, testis and foreskin, and to a lower extent in thymus, spleen, mammary glands, placenta, brain and heart. Expressed in the ovary, notably in oocytes.

It localises to the nucleus. It is found in the cytoplasm. Its subcellular location is the nucleoplasm. Transcriptional activator. It is likely involved in the regulation of keratinocytes terminal differentiation in squamous epithelia and hair follicles. Required for the maintenance of spermatogenesis. It is involved in the positive regulation of oocyte maturation, probably acting through the control of BMP15 levels and regulation of AKT signaling cascade. May also play a role in the early development of embryos. The polypeptide is Zinc finger protein basonuclin-1 (BNC1) (Homo sapiens (Human)).